The primary structure comprises 155 residues: Protein-export protein SecB (155 aa).

The protein belongs to the SecB family. Homotetramer, a dimer of dimers. One homotetramer interacts with 1 SecA dimer.

The protein localises to the cytoplasm. Its function is as follows. One of the proteins required for the normal export of preproteins out of the cell cytoplasm. It is a molecular chaperone that binds to a subset of precursor proteins, maintaining them in a translocation-competent state. It also specifically binds to its receptor SecA. The polypeptide is Protein-export protein SecB (Escherichia fergusonii (strain ATCC 35469 / DSM 13698 / CCUG 18766 / IAM 14443 / JCM 21226 / LMG 7866 / NBRC 102419 / NCTC 12128 / CDC 0568-73)).